The primary structure comprises 140 residues: uncharacterized protein (140 aa).

One can recognise a VOC domain in the interval 4 to 127 (TLTHLALHVP…AGNYVEFSYG (124 aa)).

This is an uncharacterized protein from Pseudomonas aeruginosa (strain ATCC 15692 / DSM 22644 / CIP 104116 / JCM 14847 / LMG 12228 / 1C / PRS 101 / PAO1).